The primary structure comprises 570 residues: MTTKTTPKELKAKKESKKKGSAPEPPKNGPPRTSPPNTIEKKGILRSLSFQFSNLTRKKGNDYDLTPEEEGDGYGDEMGPVLGVQNYGILMKKYKRKNRSARWAKRFFVLKECFLIYYSTSYKKVFEKTRRIDLHPKGIIPLIGCSIVSGGDVDKKNCLLIAHPQLPSAIIVAASDHQTQEMWLKALRSATKISYKNTVVGETMIRELENRGVLLNEEKKSYEERLEAEAKARKEEHDRADELAKDKEELEAEREKLIRTTKKLKDDLQNVKNELKMTNEMKKTLEQEKMSLNSKTEHLQANMESLNIEKEKIHEQLQEIVREREKVLIDNQNLSTDKCQLNNRLMEIETSRNCIMTEKEKIENLLKMNEQKTQDLEKERQYYTMKTSELMDHLKEVSEQRDLTESELKEQMMARLGAEKQLQAAEKALEHLEMALKMTGAQMTELQEHIMPDVHKLREFFEQCAEESRFEANRTGIMRNAVYARKSIFDVAFSELDGHSLDVFEKFCEYNSQVLPVREKPQKLHKTWKQSSFKRIGSIRRSKRGIRSSFRKKTDSITTQPREKEPLMQL.

The span at 1–13 (MTTKTTPKELKAK) shows a compositional bias: basic and acidic residues. A disordered region spans residues 1-42 (MTTKTTPKELKAKKESKKKGSAPEPPKNGPPRTSPPNTIEKK). The segment covering 23 to 34 (PEPPKNGPPRTS) has biased composition (pro residues). Residues 83–192 (GVQNYGILMK…WLKALRSATK (110 aa)) enclose the PH domain. A coiled-coil region spans residues 202-448 (ETMIRELENR…TGAQMTELQE (247 aa)). The segment covering 542-551 (SKRGIRSSFR) has biased composition (basic residues). A disordered region spans residues 542–570 (SKRGIRSSFRKKTDSITTQPREKEPLMQL). Over residues 561-570 (PREKEPLMQL) the composition is skewed to basic and acidic residues.

It belongs to the PLEKHD1 family.

The chain is Pleckstrin homology domain-containing family D member 1 from Caenorhabditis elegans.